We begin with the raw amino-acid sequence, 1221 residues long: DNA-directed RNA polymerase subunit beta' (1221 aa).

Positions 60, 62, 75, and 78 each coordinate Zn(2+). D449, D451, and D453 together coordinate Mg(2+). Residues C821, C896, C903, and C906 each coordinate Zn(2+).

Belongs to the RNA polymerase beta' chain family. In terms of assembly, the RNAP catalytic core consists of 2 alpha, 1 beta, 1 beta' and 1 omega subunit. When a sigma factor is associated with the core the holoenzyme is formed, which can initiate transcription. Mg(2+) is required as a cofactor. Requires Zn(2+) as cofactor.

The catalysed reaction is RNA(n) + a ribonucleoside 5'-triphosphate = RNA(n+1) + diphosphate. In terms of biological role, DNA-dependent RNA polymerase catalyzes the transcription of DNA into RNA using the four ribonucleoside triphosphates as substrates. The chain is DNA-directed RNA polymerase subunit beta' from Lactobacillus delbrueckii subsp. bulgaricus (strain ATCC 11842 / DSM 20081 / BCRC 10696 / JCM 1002 / NBRC 13953 / NCIMB 11778 / NCTC 12712 / WDCM 00102 / Lb 14).